The sequence spans 620 residues: MSFDIAKYPTLALVDSTQELRLLPKESLPKLCDELRRYLLDSVSRSSGHFASGLGTVELTVALHYVYNTPFDQLIWDVGHQAYPHKILTGRRDKIGTIRQKGGLHPFPWRGESEYDVLSVGHSSTSISAGIGIAVAAEKEGKDRRTVCVIGDGAITAGMAFEAMNHAGDIRPDMLVILNDNEMSISENVGALNNHLAQLLSGKLYSSLREGGKKVFSGVPPIKELLKRTEEHIKGMVVPGTLFEELGFNYIGPVDGHDVMGLISTLKNMRDLKGPQFLHIMTKKGRGYEPAEKDPITFHAVPKFDPSSGCLPKSSGGLPGYSKIFGDWLCETAAKDSKLMAITPAMREGSGMVEFSRKFPDRYFDVAIAEQHAVTFAAGLAIGGYKPVVAIYSTFLQRAYDQVIHDVAIQKLPVMFAIDRAGIVGADGQTHQGAFDLSYLRCIPDMVIMTPSDENECRQMLFTGYHYNDGPTAVRYPRGNAQGVALTPLEKLPIGKGLVKRHGEKLAILNFGTLMPEAAKVAEALNATLVDMRFVKPLDDTLILEMAAQHDALVTLEENAIMGGAGSGVNEVLMAHRKPVPVLNIGLPDFFIPQGTQEEARAELGLDAAGIEAKIKAWQA.

Thiamine diphosphate-binding positions include His-80 and Gly-121–Ser-123. Position 152 (Asp-152) interacts with Mg(2+). Thiamine diphosphate-binding positions include Gly-153–Ala-154, Asn-181, Tyr-288, and Glu-370. Position 181 (Asn-181) interacts with Mg(2+).

This sequence belongs to the transketolase family. DXPS subfamily. In terms of assembly, homodimer. Mg(2+) serves as cofactor. Requires thiamine diphosphate as cofactor.

The catalysed reaction is D-glyceraldehyde 3-phosphate + pyruvate + H(+) = 1-deoxy-D-xylulose 5-phosphate + CO2. It participates in metabolic intermediate biosynthesis; 1-deoxy-D-xylulose 5-phosphate biosynthesis; 1-deoxy-D-xylulose 5-phosphate from D-glyceraldehyde 3-phosphate and pyruvate: step 1/1. Functionally, catalyzes the acyloin condensation reaction between C atoms 2 and 3 of pyruvate and glyceraldehyde 3-phosphate to yield 1-deoxy-D-xylulose-5-phosphate (DXP). The chain is 1-deoxy-D-xylulose-5-phosphate synthase from Salmonella agona (strain SL483).